Here is a 454-residue protein sequence, read N- to C-terminus: Glutamate--tRNA ligase (454 aa).

A 'HIGH' region motif is present at residues 7–17 (PSPTGCLHIGG). Zn(2+) is bound by residues C96, C98, C123, and D125. Positions 230 to 234 (RLSKR) match the 'KMSKS' region motif. K233 contributes to the ATP binding site.

This sequence belongs to the class-I aminoacyl-tRNA synthetase family. Glutamate--tRNA ligase type 1 subfamily. Monomer. Zn(2+) is required as a cofactor.

It is found in the cytoplasm. It catalyses the reaction tRNA(Glu) + L-glutamate + ATP = L-glutamyl-tRNA(Glu) + AMP + diphosphate. In terms of biological role, catalyzes the attachment of glutamate to tRNA(Glu) in a two-step reaction: glutamate is first activated by ATP to form Glu-AMP and then transferred to the acceptor end of tRNA(Glu). The chain is Glutamate--tRNA ligase from Ruthia magnifica subsp. Calyptogena magnifica.